Consider the following 203-residue polypeptide: Small ribosomal subunit protein uS4 (203 aa).

The 61-residue stretch at 93 to 153 (QRLDSVVYRL…EKSKNILPIQ (61 aa)) folds into the S4 RNA-binding domain.

This sequence belongs to the universal ribosomal protein uS4 family. As to quaternary structure, part of the 30S ribosomal subunit. Contacts protein S5. The interaction surface between S4 and S5 is involved in control of translational fidelity.

In terms of biological role, one of the primary rRNA binding proteins, it binds directly to 16S rRNA where it nucleates assembly of the body of the 30S subunit. With S5 and S12 plays an important role in translational accuracy. This is Small ribosomal subunit protein uS4 from Leuconostoc mesenteroides subsp. mesenteroides (strain ATCC 8293 / DSM 20343 / BCRC 11652 / CCM 1803 / JCM 6124 / NCDO 523 / NBRC 100496 / NCIMB 8023 / NCTC 12954 / NRRL B-1118 / 37Y).